The primary structure comprises 223 residues: Adenylate kinase (223 aa).

ATP is bound at residue 10-15 (GAGKGT). The segment at 30-59 (STGDILRQAVKEGTEVGKIAGELMKAGKLI) is NMP. AMP is bound by residues threonine 31, arginine 36, 57-59 (KLI), 85-88 (GFPR), and glutamine 92. The segment at 126–163 (GRYVCAQCGAGYHDEFKRPHKEGVCDICGSTEFKRRPD) is LID. An ATP-binding site is contributed by arginine 127. Zn(2+) is bound by residues cysteine 130, cysteine 133, cysteine 150, and cysteine 153. AMP is bound by residues arginine 160 and arginine 172. Leucine 200 lines the ATP pocket.

Belongs to the adenylate kinase family. As to quaternary structure, monomer.

The protein localises to the cytoplasm. The enzyme catalyses AMP + ATP = 2 ADP. The protein operates within purine metabolism; AMP biosynthesis via salvage pathway; AMP from ADP: step 1/1. Catalyzes the reversible transfer of the terminal phosphate group between ATP and AMP. Plays an important role in cellular energy homeostasis and in adenine nucleotide metabolism. The polypeptide is Adenylate kinase (Zymomonas mobilis subsp. mobilis (strain ATCC 31821 / ZM4 / CP4)).